Consider the following 291-residue polypeptide: Ribosomal RNA small subunit methyltransferase A (291 aa).

Residues histidine 37, leucine 39, glycine 64, glutamate 85, aspartate 110, and asparagine 131 each coordinate S-adenosyl-L-methionine.

The protein belongs to the class I-like SAM-binding methyltransferase superfamily. rRNA adenine N(6)-methyltransferase family. RsmA subfamily.

The protein localises to the cytoplasm. The enzyme catalyses adenosine(1518)/adenosine(1519) in 16S rRNA + 4 S-adenosyl-L-methionine = N(6)-dimethyladenosine(1518)/N(6)-dimethyladenosine(1519) in 16S rRNA + 4 S-adenosyl-L-homocysteine + 4 H(+). Specifically dimethylates two adjacent adenosines (A1518 and A1519) in the loop of a conserved hairpin near the 3'-end of 16S rRNA in the 30S particle. May play a critical role in biogenesis of 30S subunits. The polypeptide is Ribosomal RNA small subunit methyltransferase A (Dehalococcoides mccartyi (strain CBDB1)).